The primary structure comprises 192 residues: MLVTISGPPGSGKSTVASTLADHLSYEHISGGDIFRGLAEDRDLTLAEFNELAEEDPQIDKDLDRRLRETARGRDDIVLESRLAGWMAGEYADIKIWLDAPMSVRARRIAEREDKTPAAARAETEAREESETQRYEEYYAIDFDDITIYDLSVNTARWGPDAVTDIVLDAVDAYQAERDEGPTPIENVRYQF.

Residue 7–15 (GPPGSGKST) coordinates ATP.

The protein belongs to the cytidylate kinase family. Type 2 subfamily.

The protein resides in the cytoplasm. The enzyme catalyses CMP + ATP = CDP + ADP. It catalyses the reaction dCMP + ATP = dCDP + ADP. The polypeptide is Cytidylate kinase (Halobacterium salinarum (strain ATCC 29341 / DSM 671 / R1)).